The primary structure comprises 345 residues: Uroporphyrinogen decarboxylase (345 aa).

Substrate contacts are provided by residues 26 to 30, Phe45, Asp75, Tyr151, Ser206, and His320; that span reads RQAGR.

The protein belongs to the uroporphyrinogen decarboxylase family. As to quaternary structure, homodimer.

It localises to the cytoplasm. It catalyses the reaction uroporphyrinogen III + 4 H(+) = coproporphyrinogen III + 4 CO2. It functions in the pathway porphyrin-containing compound metabolism; protoporphyrin-IX biosynthesis; coproporphyrinogen-III from 5-aminolevulinate: step 4/4. In terms of biological role, catalyzes the decarboxylation of four acetate groups of uroporphyrinogen-III to yield coproporphyrinogen-III. This is Uroporphyrinogen decarboxylase from Staphylococcus carnosus (strain TM300).